The following is a 232-amino-acid chain: RNA chaperone ProQ (232 aa).

Residues E105–D182 form a disordered region. Residues Q117–R136 are compositionally biased toward basic and acidic residues. The span at R137–P146 shows a compositional bias: basic residues. The segment covering R147–H177 has biased composition (basic and acidic residues).

This sequence belongs to the ProQ family.

The protein localises to the cytoplasm. Functionally, RNA chaperone with significant RNA binding, RNA strand exchange and RNA duplexing activities. May regulate ProP activity through an RNA-based, post-transcriptional mechanism. The sequence is that of RNA chaperone ProQ from Escherichia coli O7:K1 (strain IAI39 / ExPEC).